Here is a 298-residue protein sequence, read N- to C-terminus: Acetylglutamate kinase (298 aa).

Residues 69–70 (GG), Arg-91, and Asn-191 each bind substrate.

The protein belongs to the acetylglutamate kinase family. ArgB subfamily.

The protein resides in the cytoplasm. It carries out the reaction N-acetyl-L-glutamate + ATP = N-acetyl-L-glutamyl 5-phosphate + ADP. It participates in amino-acid biosynthesis; L-arginine biosynthesis; N(2)-acetyl-L-ornithine from L-glutamate: step 2/4. Catalyzes the ATP-dependent phosphorylation of N-acetyl-L-glutamate. The sequence is that of Acetylglutamate kinase from Neisseria gonorrhoeae (strain ATCC 700825 / FA 1090).